The primary structure comprises 169 residues: Dihydrofolate reductase type 8 (169 aa).

The region spanning Glu-3–Glu-169 is the DHFR domain.

It belongs to the dihydrofolate reductase family. Homodimer.

The enzyme catalyses (6S)-5,6,7,8-tetrahydrofolate + NADP(+) = 7,8-dihydrofolate + NADPH + H(+). It functions in the pathway cofactor biosynthesis; tetrahydrofolate biosynthesis; 5,6,7,8-tetrahydrofolate from 7,8-dihydrofolate: step 1/1. Its function is as follows. Key enzyme in folate metabolism. Catalyzes an essential reaction for de novo glycine and purine synthesis, and for DNA precursor synthesis. This chain is Dihydrofolate reductase type 8 (dhfrVIII), found in Escherichia coli.